The following is a 302-amino-acid chain: Ribonuclease HII (302 aa).

One can recognise an RNase H type-2 domain in the interval E53–A297. Residues D59, E60, and D163 each coordinate a divalent metal cation.

Belongs to the RNase HII family. The cofactor is Mn(2+). Mg(2+) is required as a cofactor.

The protein localises to the cytoplasm. It catalyses the reaction Endonucleolytic cleavage to 5'-phosphomonoester.. Functionally, endonuclease that specifically degrades the RNA of RNA-DNA hybrids. In Psychrobacter sp. (strain PRwf-1), this protein is Ribonuclease HII.